Consider the following 491-residue polypeptide: Protein OrfX3 (491 aa).

It belongs to the TULIP P47 family. As to quaternary structure, heterodimer of OrfX1 and OrfX3; crystallizes as a dimer of heterodimers.

Its function is as follows. Expression of the ptox operon (ntnh-orfX1-orfX2-orfX3-pmp1) in B.thuringiensis kills Anopheles but not Aedes mosquito 3rd instar larvae. The ntnh-pmp1 construct is about half as toxic. This Paraclostridium bifermentans (Clostridium bifermentans) protein is Protein OrfX3.